Consider the following 330-residue polypeptide: DNA-directed RNA polymerase subunit alpha (330 aa).

The tract at residues 1–231 (MQTNLLKPKA…EQLAVFAQLE (231 aa)) is alpha N-terminal domain (alpha-NTD). The tract at residues 250–330 (FDPILLRPVD…NWPPAGLDKR (81 aa)) is alpha C-terminal domain (alpha-CTD).

This sequence belongs to the RNA polymerase alpha chain family. As to quaternary structure, homodimer. The RNAP catalytic core consists of 2 alpha, 1 beta, 1 beta' and 1 omega subunit. When a sigma factor is associated with the core the holoenzyme is formed, which can initiate transcription.

The enzyme catalyses RNA(n) + a ribonucleoside 5'-triphosphate = RNA(n+1) + diphosphate. Functionally, DNA-dependent RNA polymerase catalyzes the transcription of DNA into RNA using the four ribonucleoside triphosphates as substrates. The polypeptide is DNA-directed RNA polymerase subunit alpha (Acidovorax ebreus (strain TPSY) (Diaphorobacter sp. (strain TPSY))).